Consider the following 345-residue polypeptide: Nuclear distribution protein nudE-like 1 (345 aa).

A coiled-coil region spans residues 28–190 (QSFQEARDEL…LAVRERQQEV (163 aa)). Residues 56 to 166 (VQAEQRNRDL…LDEKESLLVS (111 aa)) are self-association. The interval 64–189 (DLQADNQRLK…ELAVRERQQE (126 aa)) is interaction with KATNB1. Residues 114–133 (YVRELEQANDDLERAKRATI) are required for interaction with PAFAH1B1. The segment at 175–345 (RDLRQELAVR…SAPGMLPLSV (171 aa)) is interaction with CENPF. The tract at residues 189–256 (EVTRKSAPSS…SARISALNIV (68 aa)) is interaction with YWHAE. The interval 191-345 (TRKSAPSSPT…SAPGMLPLSV (155 aa)) is interaction with NEFL. The tract at residues 195-256 (APSSPTLDCE…SARISALNIV (62 aa)) is interaction with KATNA1. Serine 215 carries the post-translational modification Phosphoserine. Threonine 219 is modified (phosphothreonine; by CDK1 and MAPK1). Serine 231 carries the post-translational modification Phosphoserine. The segment at 241-280 (TSPLTPSARISALNIVGDLLRKVGALESKLAACRNFAKDQ) is interaction with DISC1. Serine 242 bears the Phosphoserine; by CDK1 mark. Threonine 245 carries the phosphothreonine; by CDK1 and MAPK1 modification. Residues 256–291 (VGDLLRKVGALESKLAACRNFAKDQASRKSYISGNV) are required for localization to the centrosome and interaction with dynein, dynactin, tubulin gamma, PCM1 and PCNT. Cysteine 273 carries the S-palmitoyl cysteine; by ZDHHC2, ZDHHC3 and ZDHHC7 lipid modification. Residues 315 to 345 (GAVNGFDPAPPPPGLGSSRPSSAPGMLPLSV) are disordered. The segment covering 329 to 339 (LGSSRPSSAPG) has biased composition (low complexity). At serine 344 the chain carries Phosphoserine.

The protein belongs to the nudE family. Interacts with PLEKHM1 (via N- and C-terminus). Interacts with YWHAE. Interacts directly with NEFL and indirectly with NEFH. Interacts with microtubules. Self-associates. Interacts with DISC1, dynein, dynactin, tubulin gamma, KATNA1, KATNB1, PAFAH1B1, PCM1 and PCNT. Interacts (via C-terminus) with CENPF. Interacts with ZNF365. Interacts with GTP-bound RAB9A; the interaction may lead to RAB9A-dynein motor tethering. Post-translationally, phosphorylated in mitosis. Can be phosphorylated by CDK1, CDK5 and MAPK1. Phosphorylation by CDK5 promotes interaction with KATNA1 and YWHAE. Palmitoylation at Cys-273 reduces affinity for dynein. In terms of tissue distribution, expressed in brain, heart, kidney, liver, lung, pancreas, placenta and skeletal muscle.

The protein localises to the cytoplasm. It is found in the cytoskeleton. The protein resides in the microtubule organizing center. It localises to the centrosome. Its subcellular location is the chromosome. The protein localises to the centromere. It is found in the kinetochore. The protein resides in the spindle. Required for organization of the cellular microtubule array and microtubule anchoring at the centrosome. May regulate microtubule organization at least in part by targeting the microtubule severing protein KATNA1 to the centrosome. Also positively regulates the activity of the minus-end directed microtubule motor protein dynein. May enhance dynein-mediated microtubule sliding by targeting dynein to the microtubule plus ends. Required for several dynein- and microtubule-dependent processes such as the maintenance of Golgi integrity, the centripetal motion of secretory vesicles and the coupling of the nucleus and centrosome. Also required during brain development for the migration of newly formed neurons from the ventricular/subventricular zone toward the cortical plate. Plays a role, together with DISC1, in the regulation of neurite outgrowth. Required for mitosis in some cell types but appears to be dispensible for mitosis in cortical neuronal progenitors, which instead requires NDE1. Facilitates the polymerization of neurofilaments from the individual subunits NEFH and NEFL. Positively regulates lysosome peripheral distribution and ruffled border formation in osteoclasts. Plays a role, together with DISC1, in the regulation of neurite outgrowth. May act as a RAB9A/B effector that tethers RAB9-associated late endosomes to the dynein motor for their retrograde transport to the trans-Golgi network. In Homo sapiens (Human), this protein is Nuclear distribution protein nudE-like 1 (NDEL1).